A 273-amino-acid chain; its full sequence is Glutamate 5-kinase (273 aa).

Lysine 15 is a binding site for ATP. Substrate contacts are provided by serine 55, aspartate 142, and asparagine 158. ATP is bound by residues 178–179 (SD) and 220–226 (TGGMLSK).

This sequence belongs to the glutamate 5-kinase family.

The protein localises to the cytoplasm. The catalysed reaction is L-glutamate + ATP = L-glutamyl 5-phosphate + ADP. Its pathway is amino-acid biosynthesis; L-proline biosynthesis; L-glutamate 5-semialdehyde from L-glutamate: step 1/2. In terms of biological role, catalyzes the transfer of a phosphate group to glutamate to form L-glutamate 5-phosphate. The protein is Glutamate 5-kinase of Streptococcus pyogenes serotype M2 (strain MGAS10270).